Here is a 263-residue protein sequence, read N- to C-terminus: 4-hydroxy-tetrahydrodipicolinate reductase (263 aa).

NAD(+) is bound by residues 8–13 (GACGRM), D34, 99–101 (GTT), and 125–128 (SPNY). H157 acts as the Proton donor/acceptor in catalysis. (S)-2,3,4,5-tetrahydrodipicolinate is bound at residue H158. K161 acts as the Proton donor in catalysis. A (S)-2,3,4,5-tetrahydrodipicolinate-binding site is contributed by 167-168 (GT).

It belongs to the DapB family.

The protein resides in the cytoplasm. The enzyme catalyses (S)-2,3,4,5-tetrahydrodipicolinate + NAD(+) + H2O = (2S,4S)-4-hydroxy-2,3,4,5-tetrahydrodipicolinate + NADH + H(+). It carries out the reaction (S)-2,3,4,5-tetrahydrodipicolinate + NADP(+) + H2O = (2S,4S)-4-hydroxy-2,3,4,5-tetrahydrodipicolinate + NADPH + H(+). It functions in the pathway amino-acid biosynthesis; L-lysine biosynthesis via DAP pathway; (S)-tetrahydrodipicolinate from L-aspartate: step 4/4. Catalyzes the conversion of 4-hydroxy-tetrahydrodipicolinate (HTPA) to tetrahydrodipicolinate. The polypeptide is 4-hydroxy-tetrahydrodipicolinate reductase (Methanosarcina mazei (strain ATCC BAA-159 / DSM 3647 / Goe1 / Go1 / JCM 11833 / OCM 88) (Methanosarcina frisia)).